The following is a 396-amino-acid chain: E3 ubiquitin-protein transferase MAEA (396 aa).

Positions 1 to 124 are extracellular and involved in cell to cell contact; sequence MAVQESAAQL…AAASVWKRKR (124 aa). Position 28 is a phosphothreonine (Thr28). One can recognise a LisH domain in the interval 121-153; sequence KRKRMDRMMVEHLLRCGYYNTAVKLARQSGIED. The CTLH domain maps to 159-216; the sequence is MFLTAKEVEESLERRETATCLAWCHDNKSRLRKMKSCLEFSLRIQEFIELIRQNKRLD. An RING-Gid-type zinc finger spans residues 314–381; it reads CPVCSRSLNK…QDDKVVCPRT (68 aa).

As to quaternary structure, identified in the CTLH complex that contains GID4, RANBP9 and/or RANBP10, MKLN1, MAEA, RMND5A (or alternatively its paralog RMND5B), GID8, ARMC8, WDR26 and YPEL5. Within this complex, MAEA, RMND5A (or alternatively its paralog RMND5B), GID8, WDR26, and RANBP9 and/or RANBP10 form the catalytic core, while GID4, MKLN1, ARMC8 and YPEL5 have ancillary roles. Interacts with F-actin. In terms of processing, autoubiquitinated as component of the CTLH E3 ubiquitin-protein ligase complex (in vitro).

Its subcellular location is the cytoplasm. The protein resides in the nucleus. It localises to the nucleoplasm. The protein localises to the nucleus matrix. It is found in the cell membrane. Its subcellular location is the cytoskeleton. The catalysed reaction is S-ubiquitinyl-[E2 ubiquitin-conjugating enzyme]-L-cysteine + [acceptor protein]-L-lysine = [E2 ubiquitin-conjugating enzyme]-L-cysteine + N(6)-ubiquitinyl-[acceptor protein]-L-lysine.. Its function is as follows. Core component of the CTLH E3 ubiquitin-protein ligase complex that selectively accepts ubiquitin from UBE2H and mediates ubiquitination and subsequent proteasomal degradation of the transcription factor HBP1. MAEA and RMND5A are both required for catalytic activity of the CTLH E3 ubiquitin-protein ligase complex. MAEA is required for normal cell proliferation. The CTLH E3 ubiquitin-protein ligase complex is not required for the degradation of enzymes involved in gluconeogenesis, such as FBP1. Plays a role in erythroblast enucleation during erythrocyte maturation and in the development of mature macrophages. Mediates the attachment of erythroid cell to mature macrophages; this MAEA-mediated contact inhibits erythroid cell apoptosis. Participates in erythroblastic island formation, which is the functional unit of definitive erythropoiesis. Associates with F-actin to regulate actin distribution in erythroblasts and macrophages. May contribute to nuclear architecture and cells division events. In Pongo abelii (Sumatran orangutan), this protein is E3 ubiquitin-protein transferase MAEA (MAEA).